The sequence spans 144 residues: Lysozyme C II (144 aa).

An N-terminal signal peptide occupies residues 1–15; it reads MRAVVVLLLVAVASA. Residues 16 to 144 enclose the C-type lysozyme domain; that stretch reads KVYDRCELAR…LRSYVAGCGV (129 aa). Intrachain disulfides connect Cys21–Cys142, Cys45–Cys130, Cys79–Cys95, and Cys91–Cys109. Residues Glu50 and Asp67 contribute to the active site.

Its subcellular location is the secreted. It carries out the reaction Hydrolysis of (1-&gt;4)-beta-linkages between N-acetylmuramic acid and N-acetyl-D-glucosamine residues in a peptidoglycan and between N-acetyl-D-glucosamine residues in chitodextrins.. Functionally, lysozymes have primarily a bacteriolytic function; those in tissues and body fluids are associated with the monocyte-macrophage system and enhance the activity of immunoagents. Has antibacterial activity against the Gram positive bacterium P.citreus. Has no antibacterial activity against the Gram negative bacteria E.coli and Y.ruckeri. Does not have hemolytic activity against trout erythrocytes. The polypeptide is Lysozyme C II (Oncorhynchus mykiss (Rainbow trout)).